A 354-amino-acid chain; its full sequence is Photosystem II protein D1 (354 aa).

Position 2 is an N-acetylthreonine (Thr-2). Position 2 is a phosphothreonine (Thr-2). 3 helical membrane passes run 29 to 46, 118 to 133, and 142 to 156; these read YIGW…TATS, HFLL…EWEL, and WIAV…AATA. Residue His-118 coordinates chlorophyll a. Tyr-126 provides a ligand contact to pheophytin a. Residues Asp-170 and Glu-189 each coordinate [CaMn4O5] cluster. The chain crosses the membrane as a helical span at residues 197–218; that stretch reads FHMLGVAGVFGGSLFSAMHGSL. His-198 contacts chlorophyll a. A quinone contacts are provided by residues His-215 and 264-265; that span reads SF. His-215 serves as a coordination point for Fe cation. His-272 serves as a coordination point for Fe cation. Residues 274–288 traverse the membrane as a helical segment; the sequence is FLAAWPVVGIWFTAL. Positions 332, 333, 342, and 344 each coordinate [CaMn4O5] cluster. A propeptide spanning residues 345-354 is cleaved from the precursor; that stretch reads ASIEAPSLNG.

It belongs to the reaction center PufL/M/PsbA/D family. In terms of assembly, PSII is composed of 1 copy each of membrane proteins PsbA, PsbB, PsbC, PsbD, PsbE, PsbF, PsbH, PsbI, PsbJ, PsbK, PsbL, PsbM, PsbT, PsbX, PsbY, PsbZ, Psb30/Ycf12, at least 3 peripheral proteins of the oxygen-evolving complex and a large number of cofactors. It forms dimeric complexes. The D1/D2 heterodimer binds P680, chlorophylls that are the primary electron donor of PSII, and subsequent electron acceptors. It shares a non-heme iron and each subunit binds pheophytin, quinone, additional chlorophylls, carotenoids and lipids. D1 provides most of the ligands for the Mn4-Ca-O5 cluster of the oxygen-evolving complex (OEC). There is also a Cl(-1) ion associated with D1 and D2, which is required for oxygen evolution. The PSII complex binds additional chlorophylls, carotenoids and specific lipids. is required as a cofactor. In terms of processing, tyr-161 forms a radical intermediate that is referred to as redox-active TyrZ, YZ or Y-Z. Post-translationally, C-terminally processed by CTPA; processing is essential to allow assembly of the oxygen-evolving complex and thus photosynthetic growth.

Its subcellular location is the plastid. It localises to the chloroplast thylakoid membrane. It carries out the reaction 2 a plastoquinone + 4 hnu + 2 H2O = 2 a plastoquinol + O2. In terms of biological role, photosystem II (PSII) is a light-driven water:plastoquinone oxidoreductase that uses light energy to abstract electrons from H(2)O, generating O(2) and a proton gradient subsequently used for ATP formation. It consists of a core antenna complex that captures photons, and an electron transfer chain that converts photonic excitation into a charge separation. The D1/D2 (PsbA/PsbD) reaction center heterodimer binds P680, the primary electron donor of PSII as well as several subsequent electron acceptors. The sequence is that of Photosystem II protein D1 from Selaginella uncinata (Blue spike-moss).